The primary structure comprises 215 residues: Translation initiation factor 6 (215 aa).

The protein belongs to the eIF-6 family.

In terms of biological role, binds to the 50S ribosomal subunit and prevents its association with the 30S ribosomal subunit to form the 70S initiation complex. The chain is Translation initiation factor 6 from Archaeoglobus fulgidus (strain ATCC 49558 / DSM 4304 / JCM 9628 / NBRC 100126 / VC-16).